The chain runs to 145 residues: UPF0201 protein M164_1168 (145 aa).

This sequence belongs to the UPF0201 family.

In Saccharolobus islandicus (strain M.16.4 / Kamchatka #3) (Sulfolobus islandicus), this protein is UPF0201 protein M164_1168.